Consider the following 543-residue polypeptide: Phosphoribosylaminoimidazole carboxylase (543 aa).

In terms of domain architecture, ATP-grasp spans 110 to 297 (KEHLIKNGIA…QFEAHVRAIT (188 aa)). 137–192 (GAKYGFPYMLKSRTMAYDGRGNFVVKDKSYIPEALKVLDDRPLYAEKWAPFSKELA) contacts ATP.

In the C-terminal section; belongs to the AIR carboxylase family. Class I subfamily.

The catalysed reaction is 5-amino-1-(5-phospho-D-ribosyl)imidazole-4-carboxylate + H(+) = 5-amino-1-(5-phospho-beta-D-ribosyl)imidazole + CO2. It participates in purine metabolism; IMP biosynthesis via de novo pathway; 5-amino-1-(5-phospho-D-ribosyl)imidazole-4-carboxylate from 5-amino-1-(5-phospho-D-ribosyl)imidazole (carboxylase route): step 1/1. The sequence is that of Phosphoribosylaminoimidazole carboxylase (ADE1) from Ogataea methanolica (Yeast).